Here is a 186-residue protein sequence, read N- to C-terminus: Interferon beta (186 aa).

A signal peptide spans 1–21 (MTYRWILPMALLLCFSTTALS). At Tyr-24 the chain carries Phosphotyrosine. The cysteines at positions 52 and 161 are disulfide-linked. N-linked (GlcNAc...) asparagine glycosylation is found at Asn-101 and Asn-136.

This sequence belongs to the alpha/beta interferon family. In terms of assembly, monomer.

It localises to the secreted. Type I interferon cytokine that plays a key role in the innate immune response to infection, developing tumors and other inflammatory stimuli. Signals via binding to high-affinity (IFNAR2) and low-affinity (IFNAR1) heterodimeric receptor, activating the canonical Jak-STAT signaling pathway resulting in transcriptional activation or repression of interferon-regulated genes that encode the effectors of the interferon response, such as antiviral proteins, regulators of cell proliferation and differentiation, and immunoregulatory proteins. Signals mostly via binding to a IFNAR1-IFNAR2 heterodimeric receptor, but can also function with IFNAR1 alone and independently of Jak-STAT pathways. Elicits a wide variety of responses, including antiviral and antibacterial activities, and can regulate the development of B-cells, myelopoiesis and lipopolysaccharide (LPS)-inducible production of tumor necrosis factor. Plays a role in neuronal homeostasis by regulating dopamine turnover and protecting dopaminergic neurons: acts by promoting neuronal autophagy and alpha-synuclein clearance, thereby preventing dopaminergic neuron loss. IFNB1 is more potent than interferon-alpha (IFN-alpha) in inducing the apoptotic and antiproliferative pathways required for control of tumor cell growth. The chain is Interferon beta (IFNB1) from Equus caballus (Horse).